The sequence spans 398 residues: Inner membrane protein YjgN (398 aa).

At 1–24 (MAQVINEMDVPSHSFVFHGTGERY) the chain is on the cytoplasmic side. Residues 25–45 (FLICVVNVLLTIITLGIYLPW) form a helical membrane-spanning segment. Residues 46–73 (ALMKCKRYLYANMEVNGQRFSYGITGGN) lie on the Periplasmic side of the membrane. The helical transmembrane segment at 74–94 (VFFSCLVFVFFYFAILMTVSA) threads the bilayer. D95 is a topological domain (cytoplasmic). A helical membrane pass occupies residues 96–116 (MPLIGCVLTLSLLVLLIFMAA). At 117 to 142 (KGLRYQALMTSLNGVRFSFNCSMKGV) the chain is on the periplasmic side. Residues 143–163 (WWVTFFLPILMAIGMGTVFFI) form a helical membrane-spanning segment. The Cytoplasmic segment spans residues 164–175 (STKMLHANSSSS). The chain crosses the membrane as a helical span at residues 176–196 (VIVSVVLMAIVGIVSIGIFNG). Topologically, residues 197–228 (TLYSLVMSFLWSNTSFGIHRFKVKLDTAYCIK) are periplasmic. The chain crosses the membrane as a helical span at residues 229 to 249 (YAILAFLALLPFLAVAGYIIF). Over 250–278 (DQILNAYDSSVYANDDIENLQQFMEMQRK) the chain is Cytoplasmic. Residues 279-299 (MIIAQLIYYFGIAVSTSYLTV) form a helical membrane-spanning segment. Topologically, residues 300–333 (SLRNHFMSNLSLNDGRIRFRSTLTYHGMLYRMCA) are periplasmic. A helical transmembrane segment spans residues 334-354 (LVVISGITGGLAYPLLKIWMI). Residues 355 to 398 (DWQAKNTYLLGDLDDLPLINKEEQPDKGFLASISRGIMPSLPFL) lie on the Cytoplasmic side of the membrane.

The protein resides in the cell inner membrane. The protein is Inner membrane protein YjgN (yjgN) of Escherichia coli O157:H7.